A 1105-amino-acid polypeptide reads, in one-letter code: Tubulin-folding cofactor D (1105 aa).

N-linked (GlcNAc...) asparagine glycosylation is found at Asn-122 and Asn-126. HEAT repeat units follow at residues 308 to 345 (IYLE…RLPW), 347 to 385 (LAEQ…WHGA), 401 to 446 (SKCL…CYSK), and 452 to 489 (LQTN…RHAS). Asn-373 carries an N-linked (GlcNAc...) asparagine glycan. N-linked (GlcNAc...) asparagine glycans are attached at residues Asn-721, Asn-883, and Asn-1083.

Interacts with alp21.

The protein localises to the cytoplasm. The protein resides in the cytoskeleton. Its function is as follows. Has a function in the folding of beta-tubulin. Microtubule-associated protein that is essential to direct polarized cell growth and to position the nucleus and septum to the center of the cell during mitosis. The chain is Tubulin-folding cofactor D (alp1) from Schizosaccharomyces pombe (strain 972 / ATCC 24843) (Fission yeast).